The chain runs to 673 residues: Methionine--tRNA ligase (673 aa).

The 'HIGH' region signature appears at 15 to 25; sequence PYANGPIHLGH. The Zn(2+) site is built by C146, C149, C159, and C162. The 'KMSKS' region motif lies at 332 to 336; sequence KMSKS. ATP is bound at residue K335. Positions 572–673 constitute a tRNA-binding domain; the sequence is DFAKLDLRIA…EGAQPGMRVK (102 aa).

The protein belongs to the class-I aminoacyl-tRNA synthetase family. MetG type 1 subfamily. Homodimer. Zn(2+) serves as cofactor.

The protein resides in the cytoplasm. It catalyses the reaction tRNA(Met) + L-methionine + ATP = L-methionyl-tRNA(Met) + AMP + diphosphate. In terms of biological role, is required not only for elongation of protein synthesis but also for the initiation of all mRNA translation through initiator tRNA(fMet) aminoacylation. In Shewanella loihica (strain ATCC BAA-1088 / PV-4), this protein is Methionine--tRNA ligase.